Reading from the N-terminus, the 240-residue chain is Prolactin-8A6 (240 aa).

The N-terminal stretch at 1 to 30 (MALLLSQPHFSGPLLLLVVSNLLLWEKAAS) is a signal peptide. Disulfide bonds link C34-C41, C101-C216, and C233-C240. The N-linked (GlcNAc...) asparagine glycan is linked to N212.

This sequence belongs to the somatotropin/prolactin family. In terms of tissue distribution, expressed specifically in the spongiotrophoblast and trophoblast giant cells from the junctional zone of the chorioallantoic placenta.

The protein localises to the secreted. The protein is Prolactin-8A6 (Prl8a6) of Mus musculus (Mouse).